The primary structure comprises 254 residues: 4-hydroxy-tetrahydrodipicolinate reductase (254 aa).

Residues 10–15 and 101–103 contribute to the NAD(+) site; these read GATGKV and GTT. H157 serves as the catalytic Proton donor/acceptor. Residue H158 participates in (S)-2,3,4,5-tetrahydrodipicolinate binding. K161 functions as the Proton donor in the catalytic mechanism. Residue 167–168 coordinates (S)-2,3,4,5-tetrahydrodipicolinate; the sequence is GT.

It belongs to the DapB family.

Its subcellular location is the cytoplasm. It catalyses the reaction (S)-2,3,4,5-tetrahydrodipicolinate + NAD(+) + H2O = (2S,4S)-4-hydroxy-2,3,4,5-tetrahydrodipicolinate + NADH + H(+). The enzyme catalyses (S)-2,3,4,5-tetrahydrodipicolinate + NADP(+) + H2O = (2S,4S)-4-hydroxy-2,3,4,5-tetrahydrodipicolinate + NADPH + H(+). It functions in the pathway amino-acid biosynthesis; L-lysine biosynthesis via DAP pathway; (S)-tetrahydrodipicolinate from L-aspartate: step 4/4. Its function is as follows. Catalyzes the conversion of 4-hydroxy-tetrahydrodipicolinate (HTPA) to tetrahydrodipicolinate. This Symbiobacterium thermophilum (strain DSM 24528 / JCM 14929 / IAM 14863 / T) protein is 4-hydroxy-tetrahydrodipicolinate reductase.